The primary structure comprises 949 residues: Valine--tRNA ligase (949 aa).

Positions 45-55 match the 'HIGH' region motif; sequence PNVTGVLHMGH. Positions 561–565 match the 'KMSKS' region motif; that stretch reads KMSKS. An ATP-binding site is contributed by Lys564. Residues 882 to 949 adopt a coiled-coil conformation; sequence EELLKQEKTR…EIKEKLMTLP (68 aa).

Belongs to the class-I aminoacyl-tRNA synthetase family. ValS type 1 subfamily. Monomer.

Its subcellular location is the cytoplasm. The catalysed reaction is tRNA(Val) + L-valine + ATP = L-valyl-tRNA(Val) + AMP + diphosphate. Functionally, catalyzes the attachment of valine to tRNA(Val). As ValRS can inadvertently accommodate and process structurally similar amino acids such as threonine, to avoid such errors, it has a 'posttransfer' editing activity that hydrolyzes mischarged Thr-tRNA(Val) in a tRNA-dependent manner. This is Valine--tRNA ligase from Protochlamydia amoebophila (strain UWE25).